The following is a 175-amino-acid chain: ATP synthase subunit delta (175 aa).

The protein belongs to the ATPase delta chain family. F-type ATPases have 2 components, F(1) - the catalytic core - and F(0) - the membrane proton channel. F(1) has five subunits: alpha(3), beta(3), gamma(1), delta(1), epsilon(1). F(0) has three main subunits: a(1), b(2) and c(10-14). The alpha and beta chains form an alternating ring which encloses part of the gamma chain. F(1) is attached to F(0) by a central stalk formed by the gamma and epsilon chains, while a peripheral stalk is formed by the delta and b chains.

The protein localises to the cell inner membrane. Functionally, f(1)F(0) ATP synthase produces ATP from ADP in the presence of a proton or sodium gradient. F-type ATPases consist of two structural domains, F(1) containing the extramembraneous catalytic core and F(0) containing the membrane proton channel, linked together by a central stalk and a peripheral stalk. During catalysis, ATP synthesis in the catalytic domain of F(1) is coupled via a rotary mechanism of the central stalk subunits to proton translocation. In terms of biological role, this protein is part of the stalk that links CF(0) to CF(1). It either transmits conformational changes from CF(0) to CF(1) or is implicated in proton conduction. This Xylella fastidiosa (strain M12) protein is ATP synthase subunit delta.